Reading from the N-terminus, the 613-residue chain is Proteasome-associated ATPase (613 aa).

The interval 1–29 (MSESERSEGFPEGFAGAGSGSLSSEDAAE) is disordered. A coiled-coil region spans residues 23 to 100 (SSEDAAELEA…LREEVDRLGQ (78 aa)). 300 to 305 (GCGKTL) contributes to the ATP binding site. An Isoglutamyl lysine isopeptide (Lys-Gln) (interchain with Q-Cter in protein Pup) cross-link involves residue K595. Residues 612-613 (YL) form a docks into pockets in the proteasome alpha-ring region.

This sequence belongs to the AAA ATPase family. Homohexamer. Assembles into a hexameric ring structure that caps the 20S proteasome core. Strongly interacts with the prokaryotic ubiquitin-like protein Pup through a hydrophobic interface; the interacting region of ARC lies in its N-terminal coiled-coil domain. There is one Pup binding site per ARC hexamer ring. Upon ATP-binding, the C-terminus of ARC interacts with the alpha-rings of the proteasome core, possibly by binding to the intersubunit pockets.

It functions in the pathway protein degradation; proteasomal Pup-dependent pathway. Its function is as follows. ATPase which is responsible for recognizing, binding, unfolding and translocation of pupylated proteins into the bacterial 20S proteasome core particle. May be essential for opening the gate of the 20S proteasome via an interaction with its C-terminus, thereby allowing substrate entry and access to the site of proteolysis. Thus, the C-termini of the proteasomal ATPase may function like a 'key in a lock' to induce gate opening and therefore regulate proteolysis. In Mycolicibacterium smegmatis (strain ATCC 700084 / mc(2)155) (Mycobacterium smegmatis), this protein is Proteasome-associated ATPase.